A 497-amino-acid polypeptide reads, in one-letter code: Probable pectinesterase 30 (497 aa).

The N-terminal stretch at 1-21 (MLVKVFSFFILMIIMVIGVSK) is a signal peptide. N-linked (GlcNAc...) asparagine glycosylation is found at asparagine 238 and asparagine 254. Threonine 263 serves as a coordination point for substrate. Residue aspartate 316 is the Proton donor of the active site. Cysteine 330 and cysteine 350 are disulfide-bonded. Aspartate 337 serves as the catalytic Nucleophile. Asparagine 385 is a glycosylation site (N-linked (GlcNAc...) asparagine). Residues arginine 403 and tryptophan 405 each contribute to the substrate site.

This sequence belongs to the pectinesterase family. Expressed in siliques.

It localises to the secreted. The protein localises to the cell wall. The enzyme catalyses [(1-&gt;4)-alpha-D-galacturonosyl methyl ester](n) + n H2O = [(1-&gt;4)-alpha-D-galacturonosyl](n) + n methanol + n H(+). The protein operates within glycan metabolism; pectin degradation; 2-dehydro-3-deoxy-D-gluconate from pectin: step 1/5. Its function is as follows. Acts in the modification of cell walls via demethylesterification of cell wall pectin. The polypeptide is Probable pectinesterase 30 (PME30) (Arabidopsis thaliana (Mouse-ear cress)).